A 484-amino-acid polypeptide reads, in one-letter code: Poly(A) polymerase alpha-B (484 aa).

The Nuclear localization signal 1 motif lies at 240–257 (RKQLHQLLPSHVLPKKKK). Disordered regions lie at residues 276–314 (SVDSDNSMSVPSPTNATRTSPLNSTGLSQGNSPATPVSL), 326–356 (VPQNNSTENSGGSLNESIPETATHPAFSSTP), and 375–484 (KPVT…RLNR). The Nuclear localization signal 2 signature appears at 392–407 (KRTSSPTNEESPKKTK). Residues 423–441 (EQNKLEPEELKEVHSEEKS) are compositionally biased toward basic and acidic residues. Over residues 451 to 464 (SSQRSSSTDLSDIS) the composition is skewed to low complexity.

It belongs to the poly(A) polymerase family. Monomer.

It localises to the nucleus. The catalysed reaction is RNA(n) + ATP = RNA(n)-3'-adenine ribonucleotide + diphosphate. Its function is as follows. Polymerase that creates the 3'-poly(A) tail of mRNA's. May acquire specificity through interaction with a cleavage and polyadenylation factor (CPSF). The chain is Poly(A) polymerase alpha-B (papola-b) from Xenopus laevis (African clawed frog).